We begin with the raw amino-acid sequence, 142 residues long: Pleckstrin homology-like domain family A member 2 (142 aa).

The residue at position 3 (S3) is a Phosphoserine. In terms of domain architecture, PH spans 7-99 (VLREGELEKR…WNASITLALI (93 aa)).

Belongs to the PHLDA2 family.

The protein localises to the cytoplasm. It localises to the membrane. In terms of biological role, plays a role in regulating placenta growth. May act via its PH domain that competes with other PH domain-containing proteins, thereby preventing their binding to membrane lipids. The sequence is that of Pleckstrin homology-like domain family A member 2 (PHLDA2) from Bos taurus (Bovine).